The chain runs to 186 residues: Lipid A palmitoyltransferase PagP (186 aa).

The signal sequence occupies residues M1–A25. Active-site residues include H58, D101, and S102.

It belongs to the lipid A palmitoyltransferase family. In terms of assembly, homodimer.

The protein resides in the cell outer membrane. The enzyme catalyses lipid A (E. coli) + a 1-hexadecanoyl-2-acyl-sn-glycero-3-phosphocholine = hepta-acyl lipid A (E. coli) + a 2-acyl-sn-glycero-3-phosphocholine. It carries out the reaction lipid IIA + a 1-hexadecanoyl-2-acyl-sn-glycero-3-phosphocholine = lipid IIB + a 2-acyl-sn-glycero-3-phosphocholine. The catalysed reaction is lipid IVA (E. coli) + a 1-hexadecanoyl-2-acyl-sn-glycero-3-phosphocholine = lipid IVB (E. coli) + a 2-acyl-sn-glycero-3-phosphocholine. Functionally, transfers a palmitate residue from the sn-1 position of a phospholipid to the N-linked hydroxymyristate on the proximal unit of lipid A or its precursors. This is Lipid A palmitoyltransferase PagP from Escherichia coli (strain ATCC 55124 / KO11FL).